The chain runs to 185 residues: Ethylene-responsive transcription factor ERF017 (185 aa).

A DNA-binding region (AP2/ERF) is located at residues 11–68 (KYKGVRKRKWGKWVSEIRLPNSRERIWLGSYDTPEKAARAFDAALYCLRGNNAKFNFP).

The protein belongs to the AP2/ERF transcription factor family. ERF subfamily.

The protein resides in the nucleus. Its function is as follows. Probably acts as a transcriptional activator. Binds to the GCC-box pathogenesis-related promoter element. May be involved in the regulation of gene expression by stress factors and by components of stress signal transduction pathways. The sequence is that of Ethylene-responsive transcription factor ERF017 (ERF017) from Arabidopsis thaliana (Mouse-ear cress).